Here is a 396-residue protein sequence, read N- to C-terminus: Subtilisin-like protease 5 (396 aa).

Positions 1 to 20 (MTGFFTILSFSLAALSVTNA) are cleaved as a signal peptide. Positions 21 to 116 (AQILSVPKGA…VEPDAIISQH (96 aa)) are excised as a propeptide. An Inhibitor I9 domain is found at 37 to 113 (YIVVMKDDTS…VAFVEPDAII (77 aa)). The N-linked (GlcNAc...) asparagine glycan is linked to Asn63. A Peptidase S8 domain is found at 125–396 (PWGLSRLSNR…SRLLYNGSGR (272 aa)). Residues Asp156 and His187 each act as charge relay system in the active site. Residues Asn230 and Asn248 are each glycosylated (N-linked (GlcNAc...) asparagine). Ser342 serves as the catalytic Charge relay system. Positions 376-389 (PTIRNPGPDTTSRL) are enriched in polar residues. Positions 376-396 (PTIRNPGPDTTSRLLYNGSGR) are disordered. A glycan (N-linked (GlcNAc...) asparagine) is linked at Asn392.

This sequence belongs to the peptidase S8 family.

It is found in the secreted. Its function is as follows. Secreted subtilisin-like serine protease with keratinolytic activity that contributes to pathogenicity. The chain is Subtilisin-like protease 5 (SUB5) from Trichophyton verrucosum (Cattle ringworm fungus).